The chain runs to 725 residues: Catalase-peroxidase (725 aa).

Positions Trp90 to Tyr213 form a cross-link, tryptophyl-tyrosyl-methioninium (Trp-Tyr) (with M-239). His91 (proton acceptor) is an active-site residue. The segment at residues Tyr213–Met239 is a cross-link (tryptophyl-tyrosyl-methioninium (Tyr-Met) (with W-90)). His254 contributes to the heme b binding site.

Belongs to the peroxidase family. Peroxidase/catalase subfamily. As to quaternary structure, homodimer or homotetramer. Heme b is required as a cofactor. Formation of the three residue Trp-Tyr-Met cross-link is important for the catalase, but not the peroxidase activity of the enzyme.

It carries out the reaction H2O2 + AH2 = A + 2 H2O. The catalysed reaction is 2 H2O2 = O2 + 2 H2O. Its function is as follows. Bifunctional enzyme with both catalase and broad-spectrum peroxidase activity. The chain is Catalase-peroxidase from Hahella chejuensis (strain KCTC 2396).